The primary structure comprises 310 residues: Glutaminase (310 aa).

Residues Ser-67, Asn-118, Glu-161, Asn-168, Tyr-192, Tyr-244, and Val-262 each contribute to the substrate site.

Belongs to the glutaminase family. As to quaternary structure, homotetramer.

It carries out the reaction L-glutamine + H2O = L-glutamate + NH4(+). This chain is Glutaminase, found in Legionella pneumophila (strain Lens).